An 899-amino-acid polypeptide reads, in one-letter code: CNK3/IPCEF1 fusion protein (899 aa).

The SAM domain maps to 7–72 (WSPKQVVDWT…LEAVDLLCAL (66 aa)). One can recognise a CRIC domain in the interval 80–174 (NMKNLVLKLR…TTVQKDCFVA (95 aa)). The PDZ domain occupies 211–293 (EVHLPNIKPG…GVVLLLKKRP (83 aa)). Disordered regions lie at residues 309–334 (WKPP…DTSL) and 347–390 (PPPP…FLDQ). The region spanning 332 to 457 (TSLKKEKSAI…ARPRGHGRKA (126 aa)) is the DUF1170 domain. S383 is subject to Phosphoserine. The 100-residue stretch at 503–602 (HADCQGWLYK…WLNKLGSAVI (100 aa)) folds into the PH domain. Disordered stretches follow at residues 605-687 (ESTT…PDTV), 735-770 (LSSD…TKVS), and 868-899 (QQQR…ENSI). Positions 613 to 624 (CYSESEQEDPEI) are enriched in acidic residues. The segment covering 634–662 (ASQTQSLTAQQASSSSPSLSGTSYSFSSL) has biased composition (low complexity). Residues 663–676 (ENTVKTPSSFPSSL) are compositionally biased toward polar residues. Residues 735-745 (LSSDDTSSLSS) are compositionally biased toward low complexity. Residues 761–770 (IMDKEETKVS) are compositionally biased toward basic and acidic residues. Positions 851–899 (KYREWKVMNTLLIQDIYQQQRASPAPDDTDDTPQELKKSPSSPSVENSI) are required for interaction with CYTH2. The residue at position 873 (S873) is a Phosphoserine. The span at 889-899 (SPSSPSVENSI) shows a compositional bias: polar residues.

It belongs to the CNKSR family.

Required for hepatocyte growth factor (HGF)-dependent activation of Arf6 and HGF-stimulated cell migration. The sequence is that of CNK3/IPCEF1 fusion protein (CNK3/IPCEF1) from Homo sapiens (Human).